A 269-amino-acid chain; its full sequence is Monofunctional glycosyltransferase (269 aa).

A helical membrane pass occupies residues 46–66 (AIITILILLIIFFGVMYFISS).

This sequence belongs to the glycosyltransferase 51 family.

Its subcellular location is the cell membrane. It catalyses the reaction [GlcNAc-(1-&gt;4)-Mur2Ac(oyl-L-Ala-gamma-D-Glu-L-Lys-D-Ala-D-Ala)](n)-di-trans,octa-cis-undecaprenyl diphosphate + beta-D-GlcNAc-(1-&gt;4)-Mur2Ac(oyl-L-Ala-gamma-D-Glu-L-Lys-D-Ala-D-Ala)-di-trans,octa-cis-undecaprenyl diphosphate = [GlcNAc-(1-&gt;4)-Mur2Ac(oyl-L-Ala-gamma-D-Glu-L-Lys-D-Ala-D-Ala)](n+1)-di-trans,octa-cis-undecaprenyl diphosphate + di-trans,octa-cis-undecaprenyl diphosphate + H(+). The protein operates within cell wall biogenesis; peptidoglycan biosynthesis. In terms of biological role, peptidoglycan polymerase that catalyzes glycan chain elongation using lipid-linked disaccharide-pentapeptide as the substrate. The polypeptide is Monofunctional glycosyltransferase (Staphylococcus epidermidis (strain ATCC 35984 / DSM 28319 / BCRC 17069 / CCUG 31568 / BM 3577 / RP62A)).